The following is a 356-amino-acid chain: A-type ATP synthase subunit C (356 aa).

Belongs to the V-ATPase V0D/AC39 subunit family. Has multiple subunits with at least A(3), B(3), C, D, E, F, H, I and proteolipid K(x).

Its subcellular location is the cell membrane. Functionally, component of the A-type ATP synthase that produces ATP from ADP in the presence of a proton gradient across the membrane. The chain is A-type ATP synthase subunit C from Thermoplasma volcanium (strain ATCC 51530 / DSM 4299 / JCM 9571 / NBRC 15438 / GSS1).